We begin with the raw amino-acid sequence, 214 residues long: Holliday junction branch migration complex subunit RuvA (214 aa).

A domain I region spans residues Met-1–Pro-63. Residues Gly-64 to Arg-139 form a domain II region. The flexible linker stretch occupies residues Arg-139–Ser-143. Residues Ala-144–Arg-214 are domain III.

Belongs to the RuvA family. Homotetramer. Forms an RuvA(8)-RuvB(12)-Holliday junction (HJ) complex. HJ DNA is sandwiched between 2 RuvA tetramers; dsDNA enters through RuvA and exits via RuvB. An RuvB hexamer assembles on each DNA strand where it exits the tetramer. Each RuvB hexamer is contacted by two RuvA subunits (via domain III) on 2 adjacent RuvB subunits; this complex drives branch migration. In the full resolvosome a probable DNA-RuvA(4)-RuvB(12)-RuvC(2) complex forms which resolves the HJ.

It localises to the cytoplasm. In terms of biological role, the RuvA-RuvB-RuvC complex processes Holliday junction (HJ) DNA during genetic recombination and DNA repair, while the RuvA-RuvB complex plays an important role in the rescue of blocked DNA replication forks via replication fork reversal (RFR). RuvA specifically binds to HJ cruciform DNA, conferring on it an open structure. The RuvB hexamer acts as an ATP-dependent pump, pulling dsDNA into and through the RuvAB complex. HJ branch migration allows RuvC to scan DNA until it finds its consensus sequence, where it cleaves and resolves the cruciform DNA. This Clavibacter sepedonicus (Clavibacter michiganensis subsp. sepedonicus) protein is Holliday junction branch migration complex subunit RuvA.